The sequence spans 206 residues: Thiamine-phosphate synthase (206 aa).

4-amino-2-methyl-5-(diphosphooxymethyl)pyrimidine contacts are provided by residues 35 to 39 (QLRDK) and N67. Mg(2+)-binding residues include D68 and D87. Residue S106 coordinates 4-amino-2-methyl-5-(diphosphooxymethyl)pyrimidine. 132-134 (TGT) contributes to the 2-[(2R,5Z)-2-carboxy-4-methylthiazol-5(2H)-ylidene]ethyl phosphate binding site. K135 lines the 4-amino-2-methyl-5-(diphosphooxymethyl)pyrimidine pocket. 2-[(2R,5Z)-2-carboxy-4-methylthiazol-5(2H)-ylidene]ethyl phosphate is bound by residues G163 and 183-184 (IS).

The protein belongs to the thiamine-phosphate synthase family. Mg(2+) serves as cofactor.

It carries out the reaction 2-[(2R,5Z)-2-carboxy-4-methylthiazol-5(2H)-ylidene]ethyl phosphate + 4-amino-2-methyl-5-(diphosphooxymethyl)pyrimidine + 2 H(+) = thiamine phosphate + CO2 + diphosphate. The catalysed reaction is 2-(2-carboxy-4-methylthiazol-5-yl)ethyl phosphate + 4-amino-2-methyl-5-(diphosphooxymethyl)pyrimidine + 2 H(+) = thiamine phosphate + CO2 + diphosphate. The enzyme catalyses 4-methyl-5-(2-phosphooxyethyl)-thiazole + 4-amino-2-methyl-5-(diphosphooxymethyl)pyrimidine + H(+) = thiamine phosphate + diphosphate. It participates in cofactor biosynthesis; thiamine diphosphate biosynthesis; thiamine phosphate from 4-amino-2-methyl-5-diphosphomethylpyrimidine and 4-methyl-5-(2-phosphoethyl)-thiazole: step 1/1. Its function is as follows. Condenses 4-methyl-5-(beta-hydroxyethyl)thiazole monophosphate (THZ-P) and 2-methyl-4-amino-5-hydroxymethyl pyrimidine pyrophosphate (HMP-PP) to form thiamine monophosphate (TMP). This chain is Thiamine-phosphate synthase, found in Methanospirillum hungatei JF-1 (strain ATCC 27890 / DSM 864 / NBRC 100397 / JF-1).